The chain runs to 103 residues: Astacin-like peptidase p16 (103 aa).

A Peptidase M12A domain is found at 1–103 (NAIPGQHYRW…DAFSRDGSPM (103 aa)).

Zn(2+) serves as cofactor.

Functionally, active against casein. Has a role as a digestive enzyme. The chain is Astacin-like peptidase p16 from Argiope aurantia (Black-and-yellow garden spider).